The following is a 264-amino-acid chain: Shikimate dehydrogenase (NADP(+)) (264 aa).

Shikimate-binding positions include 14–16 (SVS) and Thr61. Lys65 acts as the Proton acceptor in catalysis. 2 residues coordinate shikimate: Asn85 and Asp99. NADP(+) is bound by residues 122–126 (GAGGA), 145–150 (NRTVSR), and Ala208. Tyr210 is a shikimate binding site. Residue Gly231 coordinates NADP(+).

Belongs to the shikimate dehydrogenase family. In terms of assembly, homodimer.

It carries out the reaction shikimate + NADP(+) = 3-dehydroshikimate + NADPH + H(+). Its pathway is metabolic intermediate biosynthesis; chorismate biosynthesis; chorismate from D-erythrose 4-phosphate and phosphoenolpyruvate: step 4/7. Involved in the biosynthesis of the chorismate, which leads to the biosynthesis of aromatic amino acids. Catalyzes the reversible NADPH linked reduction of 3-dehydroshikimate (DHSA) to yield shikimate (SA). The polypeptide is Shikimate dehydrogenase (NADP(+)) (Natronomonas pharaonis (strain ATCC 35678 / DSM 2160 / CIP 103997 / JCM 8858 / NBRC 14720 / NCIMB 2260 / Gabara) (Halobacterium pharaonis)).